The primary structure comprises 244 residues: 3-deoxy-manno-octulosonate cytidylyltransferase (244 aa).

Belongs to the KdsB family.

The protein resides in the cytoplasm. It catalyses the reaction 3-deoxy-alpha-D-manno-oct-2-ulosonate + CTP = CMP-3-deoxy-beta-D-manno-octulosonate + diphosphate. Its pathway is nucleotide-sugar biosynthesis; CMP-3-deoxy-D-manno-octulosonate biosynthesis; CMP-3-deoxy-D-manno-octulosonate from 3-deoxy-D-manno-octulosonate and CTP: step 1/1. The protein operates within bacterial outer membrane biogenesis; lipopolysaccharide biosynthesis. Activates KDO (a required 8-carbon sugar) for incorporation into bacterial lipopolysaccharide in Gram-negative bacteria. The polypeptide is 3-deoxy-manno-octulosonate cytidylyltransferase (Rickettsia canadensis (strain McKiel)).